The following is a 254-amino-acid chain: MAPAASASASAVVTPSSFRCVPTASCGLGARGKAPAPRRLLHDHAQGKKRAAATWSLKAGLWDSLRSGFLKSNNSTETVEPPSAPIEEEEPLPEELVLLERTLADGSTEQIIFSSAGDVNVYDLQALCDKVGWPRRPLTKIAASLRNSYLVATLHSVTMPSKAEGEERKQLIGMARATSDHAFNATIWDVLVDPSYQGQGLGKALMEKVIRTLLQRDISNITLFADNKVVDFYKNLGFEADPQGIKGMFWYPRF.

Residues M1–N74 constitute a chloroplast transit peptide. The region spanning I111–F254 is the N-acetyltransferase domain.

It belongs to the acetyltransferase family. As to expression, expressed in roots and shoots.

It localises to the plastid. Its subcellular location is the chloroplast. The protein resides in the nucleus. The enzyme catalyses serotonin + acetyl-CoA = N-acetylserotonin + CoA + H(+). The catalysed reaction is tyramine + acetyl-CoA = N-acetyltyramine + CoA + H(+). It carries out the reaction tryptamine + acetyl-CoA = N-acetyltryptamine + CoA + H(+). It catalyses the reaction 5-methoxytryptamine + acetyl-CoA = melatonin + CoA + H(+). It participates in aromatic compound metabolism; melatonin biosynthesis; melatonin from serotonin: step 1/2. Catalyzes the N-acetylation of serotonin into N-acetylserotonin, the penultimate step in the synthesis of melatonin. Catalyzes in vitro the N-acetylation of tryptamine to produce N-acetyltryptamine, 5-methoxytryptamine to produce melatonin and tyramine to produce N-acetyltyramine. The protein is Serotonin N-acetyltransferase 1, chloroplastic of Oryza sativa subsp. japonica (Rice).